Consider the following 189-residue polypeptide: MSLISRLRAVVAGDDYLDGDFDELDYETGDDFDTGNDGGGNYSSGLAALSNANPFNNRGGSSKVIGMPGISTAAAEVSLMEPRSFDEMPKAIQALRERKTVILNLTMMEPDQAQRAVDFVAGGTFAIDGHQERVGESIFLFAPSCVTVTNSFQEEPSPSSVMNKDNEGPVSESVMAPEPAWGASVPSAI.

Residues 152–163 (FQEEPSPSSVMN) show a composition bias toward polar residues. Residues 152 to 189 (FQEEPSPSSVMNKDNEGPVSESVMAPEPAWGASVPSAI) form a disordered region.

The protein belongs to the SepF family. Homodimer. Interacts with FtsZ.

It is found in the cytoplasm. In terms of biological role, cell division protein that is part of the divisome complex and is recruited early to the Z-ring. Probably stimulates Z-ring formation, perhaps through the cross-linking of FtsZ protofilaments. Its function overlaps with FtsA. The protein is Cell division protein SepF of Prochlorococcus marinus (strain SARG / CCMP1375 / SS120).